A 195-amino-acid polypeptide reads, in one-letter code: Protease (195 aa).

One can recognise a Peptidase A2 domain in the interval alanine 71–valine 149. Aspartate 76 is a catalytic residue.

The chain is Protease from Bos taurus (Bovine).